Here is a 151-residue protein sequence, read N- to C-terminus: NAD(P)H-quinone oxidoreductase subunit N (151 aa).

The protein belongs to the complex I NdhN subunit family. As to quaternary structure, NDH-1 can be composed of about 15 different subunits; different subcomplexes with different compositions have been identified which probably have different functions.

It is found in the cellular thylakoid membrane. The enzyme catalyses a plastoquinone + NADH + (n+1) H(+)(in) = a plastoquinol + NAD(+) + n H(+)(out). It carries out the reaction a plastoquinone + NADPH + (n+1) H(+)(in) = a plastoquinol + NADP(+) + n H(+)(out). In terms of biological role, NDH-1 shuttles electrons from an unknown electron donor, via FMN and iron-sulfur (Fe-S) centers, to quinones in the respiratory and/or the photosynthetic chain. The immediate electron acceptor for the enzyme in this species is believed to be plastoquinone. Couples the redox reaction to proton translocation, and thus conserves the redox energy in a proton gradient. Cyanobacterial NDH-1 also plays a role in inorganic carbon-concentration. The protein is NAD(P)H-quinone oxidoreductase subunit N of Acaryochloris marina (strain MBIC 11017).